We begin with the raw amino-acid sequence, 736 residues long: Fidgetin (736 aa).

4 disordered regions span residues 118 to 155 (GMTPALPPPDVTASVGSSTGVASSLSEPSYSSSNCGNH), 180 to 248 (TYSG…YSPG), 272 to 295 (IPGYSYQSHNHAPIAPTPLNGSSA), and 341 to 438 (STRG…AEEQ). Positions 128–150 (VTASVGSSTGVASSLSEPSYSSS) are enriched in low complexity. A compositionally biased stretch (pro residues) spans 205 to 214 (QPPPPPPPTL). Over residues 216–232 (PSYNTSSPNLSSYNYPP) the composition is skewed to low complexity. Polar residues predominate over residues 352–368 (DTSSLAFKPTKQSMPTD). Residues alanine 467 and 507–512 (GTGRTL) each bind ATP.

This sequence belongs to the AAA ATPase family.

It localises to the nucleus matrix. It is found in the cytoplasm. The protein resides in the cytoskeleton. The protein localises to the microtubule organizing center. Its subcellular location is the centrosome. In terms of biological role, ATP-dependent microtubule severing protein. Severs microtubules along their length and depolymerizes their ends, primarily the minus-end, suppressing microtubule growth from and attachment to centrosomes. Microtubule severing may promote rapid reorganization of cellular microtubule arrays and the release of microtubules from the centrosome following nucleation. Microtubule release from the mitotic spindle poles may allow depolymerization of the microtubule end proximal to the spindle pole, leading to poleward microtubule flux and poleward motion of chromosome. This Danio rerio (Zebrafish) protein is Fidgetin (fign).